The chain runs to 422 residues: Metallocarboxypeptidase A (422 aa).

The signal sequence occupies residues 1–17 (MRSVLSLALLAANVVTA). Positions 18–112 (AVVSPFDYSG…FEAYSAGYAP (95 aa)) are cleaved as a propeptide — activation peptide. A Peptidase M14 domain is found at 119–419 (SYHSYQDHIS…AGTVAMLKAV (301 aa)). The Zn(2+) site is built by histidine 179 and glutamate 182. Substrate is bound by residues 179–182 (HARE), arginine 237, and 254–255 (NR). Cysteine 248 and cysteine 271 are disulfide-bonded. Histidine 309 contributes to the Zn(2+) binding site. 310–311 (SY) is a binding site for substrate. Glutamate 385 (proton donor/acceptor) is an active-site residue.

It belongs to the peptidase M14 family. It depends on Zn(2+) as a cofactor.

The protein localises to the secreted. Extracellular metalloprotease that contributes to pathogenicity. This Trichophyton tonsurans (Scalp ringworm fungus) protein is Metallocarboxypeptidase A (MCPA).